The chain runs to 549 residues: DNA 3'-5' helicase XPB (549 aa).

The tract at residues 1–130 (MTDGPLIVQS…RNKKIAPMLG (130 aa)) is required for protein stability or solubility. Residues 190–344 (ADSFWAGGSG…DVFSLIGPKR (155 aa)) enclose the Helicase ATP-binding domain. 203–210 (LPCGAGKT) contacts ATP. The DEAH box motif lies at 298-301 (DEVH). A Helicase C-terminal domain is found at 399-545 (VVKSILAKHP…YIIRDADDLL (147 aa)).

This sequence belongs to the helicase family. RAD25/XPB subfamily. In terms of assembly, monomer. Mn(2+) serves as cofactor. Requires Mg(2+) as cofactor.

It carries out the reaction Couples ATP hydrolysis with the unwinding of duplex DNA by translocating in the 3'-5' direction.. It catalyses the reaction ATP + H2O = ADP + phosphate + H(+). Its function is as follows. ATP-dependent 3'-5' DNA helicase, unwinds 3'-overhangs, 3'- flaps, and splayed-arm DNA substrates but not 5'-overhangs, 5'-flap substrates, 3-way junctions or Holliday junctions. Not highly efficient in vitro. Requires ATP hydrolysis for helicase activity; the ATPase activity is DNA-dependent and requires a minimum of 4 single-stranded nucleotides (nt) with 6-10 nt providing all necessary interactions for full processive unwinding. The ATPase prefers ATP over CTP or GTP, is almost inactive with TTP. DNA helicase activity requires ATP or dATP and only acts when the 3'-overhang is &gt;20 nt. Capable of unwinding a DNA:RNA hybrid if the 3'-overhang is DNA. Also catalyzes ATP-independent annealing of complementary DNA strands; annealing requires Mg(2+). In Mycobacterium tuberculosis (strain ATCC 25618 / H37Rv), this protein is DNA 3'-5' helicase XPB.